The sequence spans 400 residues: Enoyl-[acyl-carrier-protein] reductase [NADH] (400 aa).

Residues 74 to 75, 111 to 112, and 139 to 140 each bind NAD(+); these read FE, DA, and VA. Residue Tyr225 participates in substrate binding. The Proton donor role is filled by Tyr235. NAD(+) contacts are provided by residues Lys244 and 273-275; that span reads VVT.

Belongs to the TER reductase family. In terms of assembly, monomer.

It carries out the reaction a 2,3-saturated acyl-[ACP] + NAD(+) = a (2E)-enoyl-[ACP] + NADH + H(+). It functions in the pathway lipid metabolism; fatty acid biosynthesis. In terms of biological role, involved in the final reduction of the elongation cycle of fatty acid synthesis (FAS II). Catalyzes the reduction of a carbon-carbon double bond in an enoyl moiety that is covalently linked to an acyl carrier protein (ACP). This is Enoyl-[acyl-carrier-protein] reductase [NADH] from Psychromonas ingrahamii (strain DSM 17664 / CCUG 51855 / 37).